The chain runs to 247 residues: UPF0309 protein LMOf2365_2617 (247 aa).

An SIS domain is found at 31–214 (VAESIENDGV…ETMVNDNFTP (184 aa)).

This sequence belongs to the UPF0309 family.

The protein is UPF0309 protein LMOf2365_2617 of Listeria monocytogenes serotype 4b (strain F2365).